The chain runs to 103 residues: NADH-quinone oxidoreductase subunit K (103 aa).

The next 3 membrane-spanning stretches (helical) occupy residues 5–25 (VPTS…LIGV), 32–52 (ILIF…LVAF), and 66–86 (FIVM…IVAI).

The protein belongs to the complex I subunit 4L family. As to quaternary structure, NDH-1 is composed of 15 different subunits. Subunits NuoA, H, J, K, L, M, N constitute the membrane sector of the complex.

It is found in the cell membrane. The enzyme catalyses a quinone + NADH + 5 H(+)(in) = a quinol + NAD(+) + 4 H(+)(out). NDH-1 shuttles electrons from NADH, via FMN and iron-sulfur (Fe-S) centers, to quinones in the respiratory chain. The immediate electron acceptor for the enzyme in this species is believed to be a menaquinone. Couples the redox reaction to proton translocation (for every two electrons transferred, four hydrogen ions are translocated across the cytoplasmic membrane), and thus conserves the redox energy in a proton gradient. This is NADH-quinone oxidoreductase subunit K from Deinococcus radiodurans (strain ATCC 13939 / DSM 20539 / JCM 16871 / CCUG 27074 / LMG 4051 / NBRC 15346 / NCIMB 9279 / VKM B-1422 / R1).